We begin with the raw amino-acid sequence, 338 residues long: Fructose-1,6-bisphosphatase class 1 1 (338 aa).

Positions 91, 113, 115, and 116 each coordinate Mg(2+). Residues 116-119 (DGSS), N208, and K274 contribute to the substrate site. Residue E280 participates in Mg(2+) binding.

The protein belongs to the FBPase class 1 family. In terms of assembly, homotetramer. Requires Mg(2+) as cofactor.

Its subcellular location is the cytoplasm. The catalysed reaction is beta-D-fructose 1,6-bisphosphate + H2O = beta-D-fructose 6-phosphate + phosphate. It participates in carbohydrate biosynthesis; gluconeogenesis. The sequence is that of Fructose-1,6-bisphosphatase class 1 1 from Cupriavidus taiwanensis (strain DSM 17343 / BCRC 17206 / CCUG 44338 / CIP 107171 / LMG 19424 / R1) (Ralstonia taiwanensis (strain LMG 19424)).